Reading from the N-terminus, the 346-residue chain is Very-long-chain 3-oxoacyl-CoA reductase (346 aa).

Residues 23 to 43 (AAWIVFGLGISKMVFLTLNFS) traverse the membrane as a helical segment. The NADP(+) site is built by Val69, Asp123, Asn150, Tyr222, Lys226, Val255, and Ser257. The active-site Proton donor is the Tyr222. Catalysis depends on Lys226, which acts as the Lowers pKa of active site Tyr.

The protein belongs to the short-chain dehydrogenases/reductases (SDR) family.

It localises to the endoplasmic reticulum membrane. The enzyme catalyses a very-long-chain (3R)-3-hydroxyacyl-CoA + NADP(+) = a very-long-chain 3-oxoacyl-CoA + NADPH + H(+). Its pathway is lipid metabolism; fatty acid biosynthesis. Component of the microsomal membrane bound fatty acid elongation system, which produces the 26-carbon very long-chain fatty acids (VLCFA) from palmitate. Catalyzes the reduction of the 3-ketoacyl-CoA intermediate that is formed in each cycle of fatty acid elongation. VLCFAs serve as precursors for ceramide and sphingolipids. This is Very-long-chain 3-oxoacyl-CoA reductase from Kluyveromyces lactis (strain ATCC 8585 / CBS 2359 / DSM 70799 / NBRC 1267 / NRRL Y-1140 / WM37) (Yeast).